Here is a 252-residue protein sequence, read N- to C-terminus: Ubiquinone biosynthesis protein COQ4 homolog 2, mitochondrial (252 aa).

Residues H130, D131, H134, and E146 each contribute to the Zn(2+) site.

It belongs to the COQ4 family. In terms of assembly, component of a multi-subunit COQ enzyme complex. Requires Zn(2+) as cofactor.

It is found in the mitochondrion inner membrane. It carries out the reaction a 4-hydroxy-3-methoxy-5-(all-trans-polyprenyl)benzoate + H(+) = a 2-methoxy-6-(all-trans-polyprenyl)phenol + CO2. The protein operates within cofactor biosynthesis; ubiquinone biosynthesis. Its function is as follows. Lyase that catalyzes the C1-decarboxylation of 4-hydroxy-3-methoxy-5-(all-trans-polyprenyl)benzoic acid into 2-methoxy-6-(all-trans-polyprenyl)phenol during ubiquinone biosynthesis. This is Ubiquinone biosynthesis protein COQ4 homolog 2, mitochondrial from Trypanosoma cruzi (strain CL Brener).